The primary structure comprises 379 residues: UDP-4-amino-4-deoxy-L-arabinose--oxoglutarate aminotransferase (379 aa).

K182 is modified (N6-(pyridoxal phosphate)lysine).

This sequence belongs to the DegT/DnrJ/EryC1 family. ArnB subfamily. Homodimer. Pyridoxal 5'-phosphate serves as cofactor.

The enzyme catalyses UDP-4-amino-4-deoxy-beta-L-arabinose + 2-oxoglutarate = UDP-beta-L-threo-pentopyranos-4-ulose + L-glutamate. The protein operates within nucleotide-sugar biosynthesis; UDP-4-deoxy-4-formamido-beta-L-arabinose biosynthesis; UDP-4-deoxy-4-formamido-beta-L-arabinose from UDP-alpha-D-glucuronate: step 2/3. It participates in bacterial outer membrane biogenesis; lipopolysaccharide biosynthesis. Catalyzes the conversion of UDP-4-keto-arabinose (UDP-Ara4O) to UDP-4-amino-4-deoxy-L-arabinose (UDP-L-Ara4N). The modified arabinose is attached to lipid A and is required for resistance to polymyxin and cationic antimicrobial peptides. This is UDP-4-amino-4-deoxy-L-arabinose--oxoglutarate aminotransferase from Escherichia coli O81 (strain ED1a).